The primary structure comprises 357 residues: Protein MGF 360-8L (357 aa).

Belongs to the asfivirus MGF 360 family.

Functionally, plays a role in virus cell tropism, and may be required for efficient virus replication in macrophages. In African swine fever virus (isolate Tick/South Africa/Pretoriuskop Pr4/1996) (ASFV), this protein is Protein MGF 360-8L.